The following is an 89-amino-acid chain: Putative regulatory protein RBAM_015500 (89 aa).

It belongs to the RemA family.

The chain is Putative regulatory protein RBAM_015500 from Bacillus velezensis (strain DSM 23117 / BGSC 10A6 / LMG 26770 / FZB42) (Bacillus amyloliquefaciens subsp. plantarum).